The primary structure comprises 297 residues: Formylmethanofuran--tetrahydromethanopterin formyltransferase (297 aa).

The protein belongs to the FTR family. Homotetramer.

It is found in the cytoplasm. The enzyme catalyses N-formylmethanofuran + 5,6,7,8-tetrahydromethanopterin + H(+) = N(5)-formyl-5,6,7,8-tetrahydromethanopterin + methanofuran. The protein operates within one-carbon metabolism; methanogenesis from CO(2); 5,10-methenyl-5,6,7,8-tetrahydromethanopterin from CO(2): step 2/3. Functionally, catalyzes the reversible transfer of a formyl group from formylmethanofuran (formyl-MFR) to tetrahydromethanopterin (H(4)MPT) to produce 5-formyl tetrahydromethanopterin (5-formyl-H(4)MPT) and methanofuran (MFR). This is Formylmethanofuran--tetrahydromethanopterin formyltransferase from Methanococcoides burtonii (strain DSM 6242 / NBRC 107633 / OCM 468 / ACE-M).